The chain runs to 188 residues: Large ribosomal subunit protein bL35m (188 aa).

This sequence belongs to the bacterial ribosomal protein bL35 family. In terms of assembly, component of the mitochondrial large ribosomal subunit (mt-LSU). Mature mammalian 55S mitochondrial ribosomes consist of a small (28S) and a large (39S) subunit. The 28S small subunit contains a 12S ribosomal RNA (12S mt-rRNA) and 30 different proteins. The 39S large subunit contains a 16S rRNA (16S mt-rRNA), a copy of mitochondrial valine transfer RNA (mt-tRNA(Val)), which plays an integral structural role, and 52 different proteins.

The protein resides in the mitochondrion. The protein is Large ribosomal subunit protein bL35m (MRPL35) of Homo sapiens (Human).